The sequence spans 377 residues: Glutamate 5-kinase (377 aa).

An ATP-binding site is contributed by lysine 22. Serine 62, aspartate 149, and asparagine 161 together coordinate substrate. ATP is bound by residues 181–182 (TD) and 223–229 (TGGMVTK). A PUA domain is found at 285–363 (RGAIVVDAGA…AQLKRFLGPQ (79 aa)).

It belongs to the glutamate 5-kinase family.

It is found in the cytoplasm. It catalyses the reaction L-glutamate + ATP = L-glutamyl 5-phosphate + ADP. It functions in the pathway amino-acid biosynthesis; L-proline biosynthesis; L-glutamate 5-semialdehyde from L-glutamate: step 1/2. Its function is as follows. Catalyzes the transfer of a phosphate group to glutamate to form L-glutamate 5-phosphate. This chain is Glutamate 5-kinase, found in Bifidobacterium longum subsp. infantis (strain ATCC 15697 / DSM 20088 / JCM 1222 / NCTC 11817 / S12).